The following is a 424-amino-acid chain: Serine--tRNA ligase (424 aa).

233–235 (TAE) serves as a coordination point for L-serine. Residues 264 to 266 (RRE) and valine 280 contribute to the ATP site. Residue glutamate 287 participates in L-serine binding. Position 351-354 (351-354 (EISS)) interacts with ATP. Position 386 (serine 386) interacts with L-serine.

The protein belongs to the class-II aminoacyl-tRNA synthetase family. Type-1 seryl-tRNA synthetase subfamily. In terms of assembly, homodimer. The tRNA molecule binds across the dimer.

The protein resides in the cytoplasm. It carries out the reaction tRNA(Ser) + L-serine + ATP = L-seryl-tRNA(Ser) + AMP + diphosphate + H(+). The enzyme catalyses tRNA(Sec) + L-serine + ATP = L-seryl-tRNA(Sec) + AMP + diphosphate + H(+). Its pathway is aminoacyl-tRNA biosynthesis; selenocysteinyl-tRNA(Sec) biosynthesis; L-seryl-tRNA(Sec) from L-serine and tRNA(Sec): step 1/1. Functionally, catalyzes the attachment of serine to tRNA(Ser). Is also able to aminoacylate tRNA(Sec) with serine, to form the misacylated tRNA L-seryl-tRNA(Sec), which will be further converted into selenocysteinyl-tRNA(Sec). The protein is Serine--tRNA ligase of Kosmotoga olearia (strain ATCC BAA-1733 / DSM 21960 / TBF 19.5.1).